We begin with the raw amino-acid sequence, 495 residues long: Cobyric acid synthase (495 aa).

The GATase cobBQ-type domain occupies 253–446 (KISIAIVYFP…FHGIFDGSAF (194 aa)). Residue Cys334 is the Nucleophile of the active site. The active site involves His438.

This sequence belongs to the CobB/CobQ family. CobQ subfamily.

The protein operates within cofactor biosynthesis; adenosylcobalamin biosynthesis. Catalyzes amidations at positions B, D, E, and G on adenosylcobyrinic A,C-diamide. NH(2) groups are provided by glutamine, and one molecule of ATP is hydrogenolyzed for each amidation. This chain is Cobyric acid synthase, found in Chlorobium phaeobacteroides (strain BS1).